Consider the following 431-residue polypeptide: D-tagatose-1,6-bisphosphate aldolase subunit KbaZ (431 aa).

It belongs to the GatZ/KbaZ family. KbaZ subfamily. Forms a complex with KbaY.

Its pathway is carbohydrate metabolism; D-tagatose 6-phosphate degradation; D-glyceraldehyde 3-phosphate and glycerone phosphate from D-tagatose 6-phosphate: step 2/2. In terms of biological role, component of the tagatose-1,6-bisphosphate aldolase KbaYZ that is required for full activity and stability of the Y subunit. Could have a chaperone-like function for the proper and stable folding of KbaY. When expressed alone, KbaZ does not show any aldolase activity. The polypeptide is D-tagatose-1,6-bisphosphate aldolase subunit KbaZ (Citrobacter koseri (strain ATCC BAA-895 / CDC 4225-83 / SGSC4696)).